Consider the following 197-residue polypeptide: Adrenodoxin-like protein 2, mitochondrial (197 aa).

A mitochondrion-targeting transit peptide spans 1 to 74 (MVFHRLSRLG…TSFSTTSEKG (74 aa)). Positions 81–184 (INVTFVDKDG…GVRLAIPSAT (104 aa)) constitute a 2Fe-2S ferredoxin-type domain. 4 residues coordinate [2Fe-2S] cluster: C118, C124, C127, and C165.

Belongs to the adrenodoxin/putidaredoxin family. It depends on [2Fe-2S] cluster as a cofactor.

It localises to the mitochondrion. Its function is as follows. Associates with the adrenodoxin reductase MFDR to form an efficient low potential electron transfer chain that is able to reduce cytochrome C. The protein is Adrenodoxin-like protein 2, mitochondrial of Arabidopsis thaliana (Mouse-ear cress).